We begin with the raw amino-acid sequence, 319 residues long: Aliphatic sulfonates import ATP-binding protein SsuB 1 (319 aa).

Residues 63 to 282 (VTLSGVSKRF…ARASAAFAAL (220 aa)) form the ABC transporter domain. 95–102 (GRSGCGKS) contacts ATP.

The protein belongs to the ABC transporter superfamily. Aliphatic sulfonates importer (TC 3.A.1.17.2) family. As to quaternary structure, the complex is composed of two ATP-binding proteins (SsuB), two transmembrane proteins (SsuC) and a solute-binding protein (SsuA).

Its subcellular location is the cell inner membrane. It catalyses the reaction ATP + H2O + aliphatic sulfonate-[sulfonate-binding protein]Side 1 = ADP + phosphate + aliphatic sulfonateSide 2 + [sulfonate-binding protein]Side 1.. Functionally, part of the ABC transporter complex SsuABC involved in aliphatic sulfonates import. Responsible for energy coupling to the transport system. The chain is Aliphatic sulfonates import ATP-binding protein SsuB 1 from Burkholderia lata (strain ATCC 17760 / DSM 23089 / LMG 22485 / NCIMB 9086 / R18194 / 383).